Consider the following 414-residue polypeptide: Histidine--tRNA ligase (414 aa).

The protein belongs to the class-II aminoacyl-tRNA synthetase family. In terms of assembly, homodimer.

Its subcellular location is the cytoplasm. It catalyses the reaction tRNA(His) + L-histidine + ATP = L-histidyl-tRNA(His) + AMP + diphosphate + H(+). The chain is Histidine--tRNA ligase from Ehrlichia ruminantium (strain Welgevonden).